The following is a 313-amino-acid chain: tRNA dimethylallyltransferase (313 aa).

10 to 17 (GPTASGKT) contacts ATP. Substrate is bound at residue 12–17 (TASGKT). Interaction with substrate tRNA regions lie at residues 35-38 (DSAM), 159-163 (QRIQR), and 240-245 (RCVGYR).

This sequence belongs to the IPP transferase family. As to quaternary structure, monomer. Requires Mg(2+) as cofactor.

The catalysed reaction is adenosine(37) in tRNA + dimethylallyl diphosphate = N(6)-dimethylallyladenosine(37) in tRNA + diphosphate. Its function is as follows. Catalyzes the transfer of a dimethylallyl group onto the adenine at position 37 in tRNAs that read codons beginning with uridine, leading to the formation of N6-(dimethylallyl)adenosine (i(6)A). This chain is tRNA dimethylallyltransferase, found in Legionella pneumophila (strain Paris).